The following is a 319-amino-acid chain: Acetyl-coenzyme A carboxylase carboxyl transferase subunit alpha (319 aa).

Positions 32-293 constitute a CoA carboxyltransferase C-terminal domain; that stretch reads NVDAEVRALR…KAVLLNELDA (262 aa).

It belongs to the AccA family. Acetyl-CoA carboxylase is a heterohexamer composed of biotin carboxyl carrier protein (AccB), biotin carboxylase (AccC) and two subunits each of ACCase subunit alpha (AccA) and ACCase subunit beta (AccD).

Its subcellular location is the cytoplasm. The enzyme catalyses N(6)-carboxybiotinyl-L-lysyl-[protein] + acetyl-CoA = N(6)-biotinyl-L-lysyl-[protein] + malonyl-CoA. Its pathway is lipid metabolism; malonyl-CoA biosynthesis; malonyl-CoA from acetyl-CoA: step 1/1. In terms of biological role, component of the acetyl coenzyme A carboxylase (ACC) complex. First, biotin carboxylase catalyzes the carboxylation of biotin on its carrier protein (BCCP) and then the CO(2) group is transferred by the carboxyltransferase to acetyl-CoA to form malonyl-CoA. The sequence is that of Acetyl-coenzyme A carboxylase carboxyl transferase subunit alpha from Xanthomonas campestris pv. campestris (strain B100).